The chain runs to 535 residues: T-complex protein 1 subunit zeta 2 (535 aa).

This sequence belongs to the TCP-1 chaperonin family. Heterooligomeric complex of about 850 to 900 kDa that forms two stacked rings, 12 to 16 nm in diameter.

Its subcellular location is the cytoplasm. Molecular chaperone; assists the folding of proteins upon ATP hydrolysis. Known to play a role, in vitro, in the folding of actin and tubulin. This Arabidopsis thaliana (Mouse-ear cress) protein is T-complex protein 1 subunit zeta 2.